A 968-amino-acid chain; its full sequence is Insulin receptor substrate 1 (968 aa).

One can recognise a PH domain in the interval 8–109 (GMALSGYLKK…WLDKLLVLQR (102 aa)). The region spanning 122 to 236 (YDHVWQVVIQ…SAMSAKTESN (115 aa)) is the IRS-type PTB domain. The interval 248-269 (DLSHEPMRKRSSSANEASKPIN) is disordered. 2 positions are modified to phosphoserine: S286 and S287. Over residues 304–329 (RNGTLSESSNQTYFGSNHGLRSNTIS) the composition is skewed to polar residues. The disordered stretch occupies residues 304-370 (RNGTLSESSN…VDESDDNGSF (67 aa)). S342 bears the Phosphoserine mark. The residue at position 411 (Y411) is a Phosphotyrosine; by INSR. Positions 411-414 (YIPM) match the YXXM motif 1 motif. A disordered region spans residues 528-555 (TANRSQSSITKEGTSYGSSANRQKKSTS). The span at 529 to 555 (ANRSQSSITKEGTSYGSSANRQKKSTS) shows a compositional bias: polar residues. S555 is modified (phosphoserine). Positions 641 to 644 (YLEM) match the YXXM motif 2 motif. Residues 697 to 711 (EKWREQPSRSEEKKS) show a composition bias toward basic and acidic residues. The segment at 697-739 (EKWREQPSRSEEKKSNSPLNDNTFSSKPTNVESTSKSHDVHSA) is disordered. The segment covering 712-730 (NSPLNDNTFSSKPTNVEST) has biased composition (polar residues). Phosphotyrosine; by INSR is present on Y911. The tract at residues 922 to 968 (QNPAKYLKRGSRESPPVSACPEDGNTYAKIDFDQSDSSSSSSNIFNT) is disordered. Residues S932 and S935 each carry the phosphoserine modification. A Phosphotyrosine; by INSR modification is found at Y948. Residues 956-968 (SDSSSSSSNIFNT) are compositionally biased toward low complexity.

In terms of assembly, bindings to phosphatidylinositol 3-kinase and SHP2.

Its function is as follows. Activates phosphatidylinositol 3-kinase when bound to the regulatory p85 subunit. May mediate the control of various cellular processes by insulin-like peptides. When phosphorylated by the insulin receptor binds specifically to various cellular proteins containing SH2 domains. Involved in control of cell proliferation, cell size, and body and organ growth throughout development. Also has a role in a signaling pathway controlling the physiological response required to endure periods of low nutrient conditions. Insulin/insulin-like growth factor (IGF) signaling pathway has a role in regulating aging and is necessary in the ovary for vitellogenic maturation. This is Insulin receptor substrate 1 (chico) from Drosophila melanogaster (Fruit fly).